Reading from the N-terminus, the 567-residue chain is uncharacterized protein (567 aa).

The tract at residues 1-26 (MPSEKATTRHLPGAVETLSPRTGRRP) is disordered. The next 6 helical transmembrane spans lie at 57-77 (AILV…TVAF), 90-110 (VSFG…TYWL), 142-162 (VALA…IIYG), 173-193 (LFSM…LTEF), 221-241 (MLVW…TAIF), and 257-277 (VLIL…ILAW). An HAMP domain is found at 277 to 329 (WLTATPVRVVREALNRVEQGDLSGDLVVFDGTELGELQRGFNRMVEGLRERER). The Guanylate cyclase domain maps to 361-485 (AVVFVDIVGS…EPVNEAARLC (125 aa)).

It belongs to the adenylyl cyclase class-3 family.

Its subcellular location is the cell membrane. This is an uncharacterized protein from Mycobacterium bovis (strain ATCC BAA-935 / AF2122/97).